Here is a 392-residue protein sequence, read N- to C-terminus: Potassium/proton antiporter CemA (392 aa).

The next 4 helical transmembrane spans lie at 174 to 194, 269 to 289, 316 to 336, and 352 to 372; these read FLASLIWIPWIVSWFLRVWWL, SLANLGSDILACLILLAMLSL, FLILVTDVFVGFHSTHGWEVI, and FIFMFVATFPVLLDTVFKYWI.

It belongs to the CemA family.

The protein localises to the plastid. It localises to the chloroplast inner membrane. It catalyses the reaction K(+)(in) + H(+)(out) = K(+)(out) + H(+)(in). Functionally, contributes to K(+)/H(+) antiport activity by supporting proton efflux to control proton extrusion and homeostasis in chloroplasts in a light-dependent manner to modulate photosynthesis. Prevents excessive induction of non-photochemical quenching (NPQ) under continuous-light conditions. Indirectly promotes efficient inorganic carbon uptake into chloroplasts. The chain is Potassium/proton antiporter CemA from Nephroselmis olivacea (Green alga).